We begin with the raw amino-acid sequence, 242 residues long: Agamous-like MADS-box protein AGL8 (242 aa).

The MADS-box domain maps to 3-57 (RGRVQLKRIENKINRQVTFSKRRSGLLKKAHEISVLCDAEVALIVFSSKGKLFEY). The region spanning 88–178 (SENWVLEHAK…LKKIKEREKK (91 aa)) is the K-box domain. Positions 89 to 178 (ENWVLEHAKL…LKKIKEREKK (90 aa)) form a coiled coil.

As to quaternary structure, homodimer capable of binding to CArG-box sequences. As to expression, vascular tissue of cauline leaves, floral shoot apex and valves of carpels and fruits.

Its subcellular location is the nucleus. Probable transcription factor that promotes early floral meristem identity in synergy with APETALA1 and CAULIFLOWER. Is required subsequently for the transition of an inflorescence meristem into a floral meristem. Seems to be partially redundant to the function of APETALA1 and CAULIFLOWER in the up-regulation of LEAFY. Is also required for normal pattern of cell division, expansion and differentiation during morphogenesis of the silique. Probably not required for fruit elongation but instead is required to prevent ectopic activity of IND. Represses SAUR10 expression in stems and inflorescence branches. In Arabidopsis thaliana (Mouse-ear cress), this protein is Agamous-like MADS-box protein AGL8 (AGL8).